The chain runs to 301 residues: tRNA dimethylallyltransferase (301 aa).

Residue 9-16 (GPTASGKS) coordinates ATP. Residue 11 to 16 (TASGKS) participates in substrate binding. Residues 34-37 (DSMQ) are interaction with substrate tRNA.

The protein belongs to the IPP transferase family. Monomer. Mg(2+) is required as a cofactor.

The enzyme catalyses adenosine(37) in tRNA + dimethylallyl diphosphate = N(6)-dimethylallyladenosine(37) in tRNA + diphosphate. Catalyzes the transfer of a dimethylallyl group onto the adenine at position 37 in tRNAs that read codons beginning with uridine, leading to the formation of N6-(dimethylallyl)adenosine (i(6)A). In Corynebacterium glutamicum (strain R), this protein is tRNA dimethylallyltransferase.